A 276-amino-acid chain; its full sequence is 5'-nucleotidase SurE (276 aa).

A divalent metal cation contacts are provided by D14, D15, S46, and N104.

This sequence belongs to the SurE nucleotidase family. The cofactor is a divalent metal cation.

The protein localises to the cytoplasm. It catalyses the reaction a ribonucleoside 5'-phosphate + H2O = a ribonucleoside + phosphate. Functionally, nucleotidase that shows phosphatase activity on nucleoside 5'-monophosphates. The protein is 5'-nucleotidase SurE of Crocosphaera subtropica (strain ATCC 51142 / BH68) (Cyanothece sp. (strain ATCC 51142)).